Here is a 110-residue protein sequence, read N- to C-terminus: Flagellar hook-basal body complex protein FliE (110 aa).

It belongs to the FliE family.

It localises to the bacterial flagellum basal body. The chain is Flagellar hook-basal body complex protein FliE from Pseudomonas putida (strain GB-1).